A 133-amino-acid polypeptide reads, in one-letter code: UPF0292 protein TGAM_1777 (133 aa).

The Toprim domain occupies Glu-20–Leu-100. Residues Glu-26, Asp-69, and Asp-71 each coordinate Mg(2+).

This sequence belongs to the UPF0292 family. Requires Mg(2+) as cofactor.

In Thermococcus gammatolerans (strain DSM 15229 / JCM 11827 / EJ3), this protein is UPF0292 protein TGAM_1777.